Consider the following 465-residue polypeptide: MSSELMFNYTFSWPAGPKDVILTGTFDDWRGTLPLVKTAKGNFEITMPVKLXNKDDTFQFKFIVDGVWCVSDSYKKEHVSEGIENNFLQITDLVETQEVXGASRIPEAGGLLCGKPPRSAGPPSTSNRKKNKRNNKKRKSKLKKKSTKNNKKSNESXDDNEEEDXVTGTTTEDVTGTSREETPLAEPTNVSKEAPGNFHILPIDQSADTTQSNGIIGGPGPVLVPNPGEIKEFTEIRDVDARELNERLNKKEEVPEPVAGPIVESSVTEKSPALPQADDPIVETKEMAHNVQELTPQVEAVTPLINELEPLPTPEAQISIPESSKVEPVEGSLQSKLVEKRESTEGVSDGSKKVENKAKKDEEVFTLDPIVNKAPKLPLTDEQTAEGRKSPAVSEEKEKKKKQEKGSKEVKRSETSKEKKPSAKEVKKQTVKAPKKQTASPLSSSTEEPKKKKTGFFGKLKKLFK.

Disordered regions lie at residues 107–227 (EAGG…VPNP) and 247–275 (RLNK…PALP). Positions 127 to 151 (NRKKNKRNNKKRKSKLKKKSTKNNK) are enriched in basic residues. A phosphoserine mark is found at Ser153 and Ser156. Positions 156–165 (SXDDNEEEDX) are enriched in acidic residues. Residues 160–161 (NE) form an X-DNA-binding region. A compositionally biased stretch (low complexity) spans 166–177 (VTGTTTEDVTGT). The residue at position 182 (Thr182) is a Phosphothreonine. Ser271 is subject to Phosphoserine. The residue at position 295 (Thr295) is a Phosphothreonine. Residues 312-465 (PTPEAQISIP…FFGKLKKLFK (154 aa)) form a disordered region. Phosphoserine is present on residues Ser319 and Ser343. Residues 337-363 (LVEKRESTEGVSDGSKKVENKAKKDEE) are compositionally biased toward basic and acidic residues. Position 366 is a phosphothreonine (Thr366). 2 stretches are compositionally biased toward basic and acidic residues: residues 385-398 (AEGR…EEKE) and 404-428 (EKGS…EVKK). Ser394 bears the Phosphoserine mark. Ser440 carries the phosphoserine modification. Over residues 451–465 (KKKTGFFGKLKKLFK) the composition is skewed to basic residues.

The protein belongs to the CRP1/MDG1 family. Cleaved in the vicinity of position 160 to give an X-DNA-binding N-terminal subpeptide and a non-DNA-binding C-terminal subpeptide.

In terms of biological role, cruciform DNA-binding protein which exerts an enhancing effect on the cleavage of cruciform DNA (X-DNA) by endonuclease VII from bacteriophage T4. This is Cruciform DNA-recognizing protein 1 (CRP1) from Saccharomyces cerevisiae (strain FostersB) (Baker's yeast).